Here is a 489-residue protein sequence, read N- to C-terminus: Squalene monooxygenase (489 aa).

Residues 10–30 (VTYDALIVGAGVIGPCVATAL) form a helical membrane-spanning segment. Residues 21–22 (VI), 41–42 (ER), Arg49, Arg151, Val167, Asp328, and Met341 contribute to the FAD site. 2 helical membrane-spanning segments follow: residues 426–446 (FLAGVLPKPLLLTRVFFAVAF) and 464–484 (ALLEGIMILITAIKVFTPFLV).

Belongs to the squalene monooxygenase family. The cofactor is FAD.

The protein resides in the microsome membrane. It is found in the endoplasmic reticulum membrane. The catalysed reaction is squalene + reduced [NADPH--hemoprotein reductase] + O2 = (S)-2,3-epoxysqualene + oxidized [NADPH--hemoprotein reductase] + H2O + H(+). The protein operates within terpene metabolism; lanosterol biosynthesis; lanosterol from farnesyl diphosphate: step 2/3. Its function is as follows. Catalyzes the stereospecific oxidation of squalene to (S)-2,3-epoxysqualene, and is considered to be a rate-limiting enzyme in steroid biosynthesis. The polypeptide is Squalene monooxygenase (ERG1) (Candida glabrata (strain ATCC 2001 / BCRC 20586 / JCM 3761 / NBRC 0622 / NRRL Y-65 / CBS 138) (Yeast)).